The sequence spans 249 residues: MYTLVLLRHGESAWNKENRFTGWTDVDLSPQGIEEAHRAATLLHDGGYSFDLAYTSVLKRAIRTLWIVLDDLDLMYLPVHHTWRLNERHYGALQGLDKRETTEKFGKDQVQAWRRGYAVRPPALEETDPRHPRFDPRYAGLKKDDLPATESLEDTLARVVPYWNETIVPTLQDGKRILIAAHGNSIRALVKYLDGVPDDVITGLNIPTGFPLVYELDDDLHPIRHYYLGDEEEIRRATESVASQTATKK.

Substrate is bound by residues 8-15, 21-22, R60, 87-90, K98, 114-115, and 183-184; these read RHGESAWN, TG, ERHY, RR, and GN. The active-site Tele-phosphohistidine intermediate is the H9. Residue E87 is the Proton donor/acceptor of the active site.

Belongs to the phosphoglycerate mutase family. BPG-dependent PGAM subfamily.

The catalysed reaction is (2R)-2-phosphoglycerate = (2R)-3-phosphoglycerate. It participates in carbohydrate degradation; glycolysis; pyruvate from D-glyceraldehyde 3-phosphate: step 3/5. Its function is as follows. Catalyzes the interconversion of 2-phosphoglycerate and 3-phosphoglycerate. This chain is 2,3-bisphosphoglycerate-dependent phosphoglycerate mutase, found in Methanosphaerula palustris (strain ATCC BAA-1556 / DSM 19958 / E1-9c).